The sequence spans 251 residues: HTH-type transcriptional regulator UlaR (251 aa).

The HTH deoR-type domain occupies 3 to 58 (EAQRHQILLEMLAQLGFVTVEKVVERLGISPATARRDINKLDESGKLKKVRNGAEA). Positions 20–39 (VTVEKVVERLGISPATARRD) form a DNA-binding region, H-T-H motif.

The protein localises to the cytoplasm. Its function is as follows. Represses ulaG and the ulaABCDEF operon. In Escherichia coli O139:H28 (strain E24377A / ETEC), this protein is HTH-type transcriptional regulator UlaR.